Consider the following 241-residue polypeptide: Ribosome assembly factor mrt4 (241 aa).

It belongs to the universal ribosomal protein uL10 family. In terms of assembly, associates with the pre-60S ribosomal particle.

The protein localises to the nucleus. The protein resides in the nucleolus. It is found in the cytoplasm. Its function is as follows. Component of the ribosome assembly machinery. Nuclear paralog of the ribosomal protein P0, it binds pre-60S subunits at an early stage of assembly in the nucleolus, and is replaced by P0 in cytoplasmic pre-60S subunits and mature 80S ribosomes. The chain is Ribosome assembly factor mrt4 from Schizosaccharomyces pombe (strain 972 / ATCC 24843) (Fission yeast).